The following is a 297-amino-acid chain: N-acetylneuraminate lyase (297 aa).

Aceneuramate-binding residues include serine 47 and threonine 48. Tyrosine 137 serves as the catalytic Proton donor. Residue lysine 165 is the Schiff-base intermediate with substrate of the active site. Aceneuramate is bound by residues threonine 167, glycine 189, aspartate 191, glutamate 192, and serine 208.

The protein belongs to the DapA family. NanA subfamily. As to quaternary structure, homotetramer.

The protein localises to the cytoplasm. The catalysed reaction is aceneuramate = aldehydo-N-acetyl-D-mannosamine + pyruvate. It participates in amino-sugar metabolism; N-acetylneuraminate degradation; D-fructose 6-phosphate from N-acetylneuraminate: step 1/5. Catalyzes the reversible aldol cleavage of N-acetylneuraminic acid (sialic acid; Neu5Ac) to form pyruvate and N-acetylmannosamine (ManNAc) via a Schiff base intermediate. The polypeptide is N-acetylneuraminate lyase (Enterobacter sp. (strain 638)).